A 579-amino-acid chain; its full sequence is V-type ATP synthase alpha chain (579 aa).

Gly238–Thr245 is a binding site for ATP.

The protein belongs to the ATPase alpha/beta chains family.

It catalyses the reaction ATP + H2O + 4 H(+)(in) = ADP + phosphate + 5 H(+)(out). Produces ATP from ADP in the presence of a proton gradient across the membrane. The V-type alpha chain is a catalytic subunit. This is V-type ATP synthase alpha chain from Borrelia hermsii (strain HS1 / DAH).